Here is a 159-residue protein sequence, read N- to C-terminus: uncharacterized protein (159 aa).

Residues 1-13 show a composition bias toward basic and acidic residues; the sequence is MESRPSGRQHASE. Positions 1-35 are disordered; the sequence is MESRPSGRQHASEGDGDQSPTQCAGMRSSGRSDQP.

This is an uncharacterized protein from Homo sapiens (Human).